A 139-amino-acid chain; its full sequence is Hydrogenase maturation factor HypA (139 aa).

Positions 1 and 2 each coordinate Ni(2+). C73 and C76 together coordinate Zn(2+). H98 provides a ligand contact to Ni(2+). 2 residues coordinate Zn(2+): C110 and C113.

The protein belongs to the HypA/HybF family. Monomer and homodimer. Could also form hexamers. Forms a complex with HypB.

Involved in the maturation of [NiFe] hydrogenases. Required for nickel insertion into the metal center of the hydrogenase. This chain is Hydrogenase maturation factor HypA, found in Thermococcus kodakarensis (strain ATCC BAA-918 / JCM 12380 / KOD1) (Pyrococcus kodakaraensis (strain KOD1)).